Consider the following 317-residue polypeptide: Melanocyte-stimulating hormone receptor (317 aa).

At 1-37 (MPVLGSQRRLLGSLNCTPPATFPLMLAPNRTGPQCLE) the chain is on the extracellular side. Asparagine 29 is a glycosylation site (N-linked (GlcNAc...) asparagine). Residues 38 to 63 (VSIPNGLFLSLGLVSLVENVLVVAAI) form a helical membrane-spanning segment. Residues 64-72 (AKNSNLHSP) lie on the Cytoplasmic side of the membrane. Residues 73 to 93 (MYYFICCLAVSDLLVSVSNVL) traverse the membrane as a helical segment. At 94–118 (ETAVMLLLEAGALAARAAVVQQLDN) the chain is on the extracellular side. A helical membrane pass occupies residues 119–140 (VIDVLICGSMVSSLCFLGAIAV). Residues 141-163 (DRYISIFYALRYHSVVTLPRAWR) lie on the Cytoplasmic side of the membrane. Residues 164-183 (IIAAIWVASILTSLLFITYY) traverse the membrane as a helical segment. The Extracellular segment spans residues 184–191 (NHTVVLLC). Residues 192–211 (LVGFFIAMLALMAVLYVHML) form a helical membrane-spanning segment. Residues 212-240 (ARACQHARGIARLQKRQRPIHRGFGLKGA) are Cytoplasmic-facing. The helical transmembrane segment at 241–266 (ATLTILLGVFFLCWGPFFLHLSLIVL) threads the bilayer. Residues 267–279 (CPQHPTCGCIFKN) are Extracellular-facing. The chain crosses the membrane as a helical span at residues 280-300 (FNLFLALIICNAIVDPLIYAF). Residues 301 to 317 (RSQELRKTLQEVLQCSW) lie on the Cytoplasmic side of the membrane. Cysteine 315 is lipidated: S-palmitoyl cysteine.

The protein belongs to the G-protein coupled receptor 1 family. In terms of assembly, interacts with MGRN1, but does not undergo MGRN1-mediated ubiquitination; this interaction competes with GNAS-binding and thus inhibits agonist-induced cAMP production. Interacts with OPN3; the interaction results in a decrease in MC1R-mediated cAMP signaling and ultimately a decrease in melanin production in melanocytes.

It is found in the cell membrane. Receptor for MSH (alpha, beta and gamma) and ACTH. The activity of this receptor is mediated by G proteins which activate adenylate cyclase. Mediates melanogenesis, the production of eumelanin (black/brown) and phaeomelanin (red/yellow), via regulation of cAMP signaling in melanocytes. The sequence is that of Melanocyte-stimulating hormone receptor (MC1R) from Rangifer tarandus (Reindeer).